We begin with the raw amino-acid sequence, 135 residues long: Small ribosomal subunit protein uS17 (135 aa).

Residues 1-59 are disordered; that stretch reads MAEAKTGAKAAPRVAKAAKAAPKKAAPNDAEAIGAANAANVKGPKHTPRTPKPRGRRKT. The segment covering 8 to 42 has biased composition (low complexity); it reads AKAAPRVAKAAKAAPKKAAPNDAEAIGAANAANVK. Residues 43–59 show a composition bias toward basic residues; that stretch reads GPKHTPRTPKPRGRRKT.

The protein belongs to the universal ribosomal protein uS17 family. As to quaternary structure, part of the 30S ribosomal subunit.

In terms of biological role, one of the primary rRNA binding proteins, it binds specifically to the 5'-end of 16S ribosomal RNA. The sequence is that of Small ribosomal subunit protein uS17 from Mycobacterium bovis (strain ATCC BAA-935 / AF2122/97).